A 395-amino-acid polypeptide reads, in one-letter code: MGIKHLFQVIQENAPDAIKAGDIKNHFGRKVAIDASMSIYSFLIAVRSEGQQLMSESGETTSHLMGMFYRTLRMVDNGIKPLYVFDGAPPKLKSGELAKRTARKAEATEAHEEAKETGTAEDVEKFSRRTVRVTREHNAECKKLLKLMGIPYIDAPTEAEAQCAVLARAGKVYAAASEDMDTLCFEAPILLRHLTFSEQRKEPIQEIHLNRALEGLGMDRKQFIDLCILLGCDYLEPIPKVGPNTALKLIREHGSLEKVVEAIENDPKKKYVIPEYWPYQDARELFLHPDVREADHPECDFKWEAPDVEALVEFLVKDKGFNEDRVRNGAARLQKNLKTAQQSRLEGFFKPVARTDEEKASLKRKHDEKLQEQKKRKKEEAKAKKEAKAKPRGAA.

Positions 1-104 (MGIKHLFQVI…GELAKRTARK (104 aa)) are N-domain. A Mg(2+)-binding site is contributed by Asp-34. The DNA site is built by Arg-47 and Arg-70. Asp-86 is a Mg(2+) binding site. The segment at 102–121 (ARKAEATEAHEEAKETGTAE) is disordered. The tract at residues 122-253 (DVEKFSRRTV…NTALKLIREH (132 aa)) is I-domain. Mg(2+) contacts are provided by Glu-158, Glu-160, Asp-179, and Asp-181. Residue Glu-158 participates in DNA binding. Residues Gly-231 and Asp-233 each coordinate DNA. Asp-233 provides a ligand contact to Mg(2+). The interaction with PCNA stretch occupies residues 341–349 (QQSRLEGFF). The interval 348-395 (FFKPVARTDEEKASLKRKHDEKLQEQKKRKKEEAKAKKEAKAKPRGAA) is disordered. Positions 353–389 (ARTDEEKASLKRKHDEKLQEQKKRKKEEAKAKKEAKA) are enriched in basic and acidic residues.

The protein belongs to the XPG/RAD2 endonuclease family. FEN1 subfamily. As to quaternary structure, interacts with PCNA. Three molecules of fen1 bind to one PCNA trimer with each molecule binding to one PCNA monomer. PCNA stimulates the nuclease activity without altering cleavage specificity. Mg(2+) is required as a cofactor. Post-translationally, phosphorylated. Phosphorylation upon DNA damage induces relocalization to the nuclear plasma.

The protein resides in the nucleus. Its subcellular location is the nucleolus. It localises to the nucleoplasm. It is found in the mitochondrion. Structure-specific nuclease with 5'-flap endonuclease and 5'-3' exonuclease activities involved in DNA replication and repair. During DNA replication, cleaves the 5'-overhanging flap structure that is generated by displacement synthesis when DNA polymerase encounters the 5'-end of a downstream Okazaki fragment. It enters the flap from the 5'-end and then tracks to cleave the flap base, leaving a nick for ligation. Also involved in the long patch base excision repair (LP-BER) pathway, by cleaving within the apurinic/apyrimidinic (AP) site-terminated flap. Acts as a genome stabilization factor that prevents flaps from equilibrating into structures that lead to duplications and deletions. Also possesses 5'-3' exonuclease activity on nicked or gapped double-stranded DNA, and exhibits RNase H activity. Also involved in replication and repair of rDNA and in repairing mitochondrial DNA. This is Flap endonuclease 1 (fen1) from Aspergillus fumigatus (strain CBS 144.89 / FGSC A1163 / CEA10) (Neosartorya fumigata).